Reading from the N-terminus, the 526-residue chain is MSVIKRALISLSDKAGAVEFAQNLHKLGVEILSTGGTAKLLADAGVPVIEVADYTGFPEMLDGRVKTLHPKIHGGILGRRDLDEHVAKMEEHGIGNIDLVCVNLYPFAATIAKPGCTLEDAIENIDIGGPAMVRSAAKNWKHVAIVTDTADFPAIAAELEANNGALSDKTRFNLSRKAFSHTAQYDGMISNYLTSLSDDVLSGQPQIGEFPSRFNQSWIKVQDMRYGENPHQRAAFYRDIDPAAGSLSAYNQLQGKELSYNNIADADAAWEAVKSFDAPACVIVKHANPCGVAVAADTLTAYKLAYATDTTSAFGGIIAFNREVDGETVKQITDNQFMEVLMAPKFTAEALEIAAAKKNVRVLEVPLKAGANRFELKRVGGGLLVQTPDINRINRADLKVVSKRQPTEQEWNDLLFVWNVAKYVKSNAIVFGKGGQTYGIGAGQMSRVDSTRIAARKAQDAGLDLNGACAASDAFFPFRDGVDVIAEQGIKAIIHPAGSMRDQEVFDAADEHGIAMAVTGIRHFRH.

The MGS-like domain maps to 1-147; sequence MSVIKRALIS…KNWKHVAIVT (147 aa).

It belongs to the PurH family.

It catalyses the reaction (6R)-10-formyltetrahydrofolate + 5-amino-1-(5-phospho-beta-D-ribosyl)imidazole-4-carboxamide = 5-formamido-1-(5-phospho-D-ribosyl)imidazole-4-carboxamide + (6S)-5,6,7,8-tetrahydrofolate. It carries out the reaction IMP + H2O = 5-formamido-1-(5-phospho-D-ribosyl)imidazole-4-carboxamide. It functions in the pathway purine metabolism; IMP biosynthesis via de novo pathway; 5-formamido-1-(5-phospho-D-ribosyl)imidazole-4-carboxamide from 5-amino-1-(5-phospho-D-ribosyl)imidazole-4-carboxamide (10-formyl THF route): step 1/1. The protein operates within purine metabolism; IMP biosynthesis via de novo pathway; IMP from 5-formamido-1-(5-phospho-D-ribosyl)imidazole-4-carboxamide: step 1/1. The protein is Bifunctional purine biosynthesis protein PurH of Neisseria gonorrhoeae (strain NCCP11945).